Here is a 1012-residue protein sequence, read N- to C-terminus: Axonemal dynein light chain domain-containing protein 1 (1012 aa).

A compositionally biased stretch (low complexity) spans 1–17 (MSLPKTPSTPLNSTSTS). The segment at 1–34 (MSLPKTPSTPLNSTSTSESKKLKVSVAKEGTRGL) is disordered. Coiled-coil stretches lie at residues 317 to 402 (QRIL…IWSS), 447 to 486 (EDLALLQKLTQKWRNLVNKLKQEVEQMEESTSETLKIVKD), and 572 to 597 (SERQYMEEIIKNIQKLYKEYEIRING). Positions 841–854 (PEIDESFKEDEEES) are enriched in acidic residues. 2 disordered regions span residues 841–879 (PEIDESFKEDEEESKEDRKLQEENKERAEEQPSTSTEKE) and 963–1012 (LEEL…KKGH). Basic and acidic residues-rich tracts occupy residues 855 to 879 (KEDRKLQEENKERAEEQPSTSTEKE) and 963 to 987 (LEELVMTSRKESKEEKENQDEREVK). Positions 988–997 (EEEEQQEEEE) are enriched in acidic residues.

In terms of tissue distribution, highly expressed in testis. Highly expressed in the round and late spermatids.

The protein localises to the cytoplasm. Its function is as follows. May be essential for spermiogenesis and male fertility probably by regulating the manchette dynamics, spermatid head shaping and sperm flagellum assembly. This Homo sapiens (Human) protein is Axonemal dynein light chain domain-containing protein 1.